The following is a 257-amino-acid chain: Thiazole synthase (257 aa).

The active-site Schiff-base intermediate with DXP is the Lys-96. 1-deoxy-D-xylulose 5-phosphate contacts are provided by residues Gly-157, 184–185 (AG), and 206–207 (NT).

Belongs to the ThiG family. As to quaternary structure, homotetramer. Forms heterodimers with either ThiH or ThiS.

It localises to the cytoplasm. It catalyses the reaction [ThiS sulfur-carrier protein]-C-terminal-Gly-aminoethanethioate + 2-iminoacetate + 1-deoxy-D-xylulose 5-phosphate = [ThiS sulfur-carrier protein]-C-terminal Gly-Gly + 2-[(2R,5Z)-2-carboxy-4-methylthiazol-5(2H)-ylidene]ethyl phosphate + 2 H2O + H(+). Its pathway is cofactor biosynthesis; thiamine diphosphate biosynthesis. Functionally, catalyzes the rearrangement of 1-deoxy-D-xylulose 5-phosphate (DXP) to produce the thiazole phosphate moiety of thiamine. Sulfur is provided by the thiocarboxylate moiety of the carrier protein ThiS. In vitro, sulfur can be provided by H(2)S. The polypeptide is Thiazole synthase (Rhizobium rhizogenes (strain K84 / ATCC BAA-868) (Agrobacterium radiobacter)).